Reading from the N-terminus, the 311-residue chain is MSDELKDNAAKEASFGAFLTRQLMKSVPAVTGNLDGKVAIVTGANVGLGLACARQLLSLQLSHLILAVRSLRKGEAAALELQASFPHARVEVWALEMESYASIQAFVSRCHSELGRVDIAILNAGLALKRFQTCTNPQTTPREITLQVNFLSTVFLALLLLPILGAKKEKKDAVFIPGRLTLVGSDTVYWVNARELKSRPLLQAANSSEGFDGFEQYKMSKLFVLMFVAKLARDLVSPDQVIVNVACPGLCKGTAFVREPDSNWAKQAIVSSLIRLVGRTPEQGARVYLAAAILQGPKSHGSMISEGDILP.

Residues L48, K73, E96, N123, Y217, and K221 each coordinate NADP(+). The active-site Proton donor is Y217. The active-site Lowers pKa of active site Tyr is the K221.

The protein belongs to the short-chain dehydrogenases/reductases (SDR) family.

It participates in secondary metabolite biosynthesis. Its function is as follows. Short chain dehydrogenase; part of the gene cluster that mediates the biosynthesis of oxopyrrolidines, polyketide-amino acid hybrid compounds with feature structures of tetramic acid. Does not seem to play a role in oxopyrrolidines A and B biosynthesis. May be involved in further modifications of these oxopyrrolidines. This Penicillium oxalicum (strain 114-2 / CGMCC 5302) (Penicillium decumbens) protein is Short chain dehydrogenase opdN.